We begin with the raw amino-acid sequence, 497 residues long: Glucose-6-phosphate isomerase (497 aa).

The Proton donor role is filled by Glu-350. Residues His-381 and Lys-485 contribute to the active site.

Belongs to the GPI family.

It is found in the cytoplasm. The enzyme catalyses alpha-D-glucose 6-phosphate = beta-D-fructose 6-phosphate. The protein operates within carbohydrate biosynthesis; gluconeogenesis. It participates in carbohydrate degradation; glycolysis; D-glyceraldehyde 3-phosphate and glycerone phosphate from D-glucose: step 2/4. Functionally, catalyzes the reversible isomerization of glucose-6-phosphate to fructose-6-phosphate. The polypeptide is Glucose-6-phosphate isomerase (Legionella pneumophila).